A 101-amino-acid chain; its full sequence is Small ribosomal subunit protein uS14 (101 aa).

This sequence belongs to the universal ribosomal protein uS14 family. Part of the 30S ribosomal subunit. Contacts proteins S3 and S10.

Its function is as follows. Binds 16S rRNA, required for the assembly of 30S particles and may also be responsible for determining the conformation of the 16S rRNA at the A site. This Brucella abortus (strain S19) protein is Small ribosomal subunit protein uS14.